Consider the following 955-residue polypeptide: Glycine dehydrogenase (decarboxylating) (955 aa).

Lys702 is subject to N6-(pyridoxal phosphate)lysine.

This sequence belongs to the GcvP family. In terms of assembly, the glycine cleavage system is composed of four proteins: P, T, L and H. The cofactor is pyridoxal 5'-phosphate.

The catalysed reaction is N(6)-[(R)-lipoyl]-L-lysyl-[glycine-cleavage complex H protein] + glycine + H(+) = N(6)-[(R)-S(8)-aminomethyldihydrolipoyl]-L-lysyl-[glycine-cleavage complex H protein] + CO2. Functionally, the glycine cleavage system catalyzes the degradation of glycine. The P protein binds the alpha-amino group of glycine through its pyridoxal phosphate cofactor; CO(2) is released and the remaining methylamine moiety is then transferred to the lipoamide cofactor of the H protein. The protein is Glycine dehydrogenase (decarboxylating) of Stenotrophomonas maltophilia (strain R551-3).